The chain runs to 327 residues: Biotin synthase (327 aa).

Residues 51-278 (QTIQLSTLMS…KSYVRLSAGR (228 aa)) enclose the Radical SAM core domain. Residues cysteine 66, cysteine 70, and cysteine 73 each coordinate [4Fe-4S] cluster. [2Fe-2S] cluster is bound by residues cysteine 110, cysteine 141, cysteine 201, and arginine 273.

The protein belongs to the radical SAM superfamily. Biotin synthase family. As to quaternary structure, homodimer. It depends on [4Fe-4S] cluster as a cofactor. The cofactor is [2Fe-2S] cluster.

The catalysed reaction is (4R,5S)-dethiobiotin + (sulfur carrier)-SH + 2 reduced [2Fe-2S]-[ferredoxin] + 2 S-adenosyl-L-methionine = (sulfur carrier)-H + biotin + 2 5'-deoxyadenosine + 2 L-methionine + 2 oxidized [2Fe-2S]-[ferredoxin]. It participates in cofactor biosynthesis; biotin biosynthesis; biotin from 7,8-diaminononanoate: step 2/2. Its function is as follows. Catalyzes the conversion of dethiobiotin (DTB) to biotin by the insertion of a sulfur atom into dethiobiotin via a radical-based mechanism. The polypeptide is Biotin synthase (Histophilus somni (strain 2336) (Haemophilus somnus)).